Here is a 515-residue protein sequence, read N- to C-terminus: MTDHTMKKNPVSIPHTVWYADDIRRGEREAADVLGLTLYELMLRAGEAAFQVCRSAYPDARHWLVLCGHGNNGGDGYVVARLAKAVGIEVTLLAQESDKPLPEEAALAREAWLNAGGEIHASNIVWPESVDLIVDALLGTGLRQAPRESISQLIDHANSHPAPIVAVDIPSGLLAETGATPGAVINADHTITFIALKPGLLTGKARDVTGQLHFDSLGLDSWLAGQETKIQRFSAEQLSHWLKPRRPTSHKGDHGRLVIIGGDHGTAGAIRMTGEAALRAGAGLVRVLTRSENIAPLLTARPELMVHELTMDSLTESLEWADVVVIGPGLGQQEWGKKALQKVENFRKPMLWDADALNLLAINPDKRHNRVITPHPGEAARLLGCSVAEIESDRLHCAKRLVQRYGGVAVLKGAGTVVAAHPDALGIIDAGNAGMASGGMGDVLSGIIGALLGQKLSPYDAACAGCVAHGAAADVLAARFGTRGMLATDLFSTLQRIVNPEVTDKNHDESSNSAP.

The interval 1 to 227 (MTDHTMKKNP…GLDSWLAGQE (227 aa)) is NAD(P)H-hydrate epimerase. In terms of domain architecture, YjeF N-terminal spans 23-225 (IRRGEREAAD…SLGLDSWLAG (203 aa)). An NADPHX 1; for epimerase activity region spans residues 71–75 (NNGGD). Residues Asn72 and Asp135 each contribute to the K(+) site. The segment at 139 to 145 (GTGLRQA) is NADPHX 1; for epimerase activity. Position 168 (Asp168) interacts with (6S)-NADPHX. K(+) is bound at residue Ser171. The YjeF C-terminal domain maps to 234–501 (SAEQLSHWLK…STLQRIVNPE (268 aa)). The ADP-dependent (S)-NAD(P)H-hydrate dehydratase stretch occupies residues 235-515 (AEQLSHWLKP…NHDESSNSAP (281 aa)). Residue Gly329 coordinates (6S)-NADPHX. The tract at residues 375 to 381 (HPGEAAR) is NADPHX 2; for dehydratase activity. ADP contacts are provided by residues 412-416 (KGAGT) and 432-441 (NAGMASGGMG). Asp442 is a (6S)-NADPHX binding site.

It in the N-terminal section; belongs to the NnrE/AIBP family. This sequence in the C-terminal section; belongs to the NnrD/CARKD family. The cofactor is K(+).

The catalysed reaction is (6S)-NADHX + ADP = AMP + phosphate + NADH + H(+). It catalyses the reaction (6S)-NADPHX + ADP = AMP + phosphate + NADPH + H(+). The enzyme catalyses (6R)-NADHX = (6S)-NADHX. It carries out the reaction (6R)-NADPHX = (6S)-NADPHX. Functionally, bifunctional enzyme that catalyzes the epimerization of the S- and R-forms of NAD(P)HX and the dehydration of the S-form of NAD(P)HX at the expense of ADP, which is converted to AMP. This allows the repair of both epimers of NAD(P)HX, a damaged form of NAD(P)H that is a result of enzymatic or heat-dependent hydration. In Escherichia coli (strain K12), this protein is Bifunctional NAD(P)H-hydrate repair enzyme Nnr (nnr).